Here is a 304-residue protein sequence, read N- to C-terminus: L-threonate dehydrogenase (304 aa).

Residues 7-35 and threonine 102 contribute to the NAD(+) site; that span reads YAVA…TYGV. Lysine 178 is a catalytic residue. Position 246 (lysine 246) interacts with NAD(+).

This sequence belongs to the HIBADH-related family. L-threonate dehydrogenase subfamily.

The enzyme catalyses L-threonate + NAD(+) = 2-dehydro-L-erythronate + NADH + H(+). Catalyzes oxidation of L-threonate to 2-oxo-tetronate. Can use either NAD(+) or NADP(+) as cosubstrate, with a preference for NAD(+). The polypeptide is L-threonate dehydrogenase (Pectobacterium atrosepticum (strain SCRI 1043 / ATCC BAA-672) (Erwinia carotovora subsp. atroseptica)).